The chain runs to 358 residues: Uroporphyrinogen decarboxylase (358 aa).

Residues 27 to 31 (RQAGR), aspartate 77, tyrosine 154, serine 209, and histidine 327 contribute to the substrate site.

The protein belongs to the uroporphyrinogen decarboxylase family. Homodimer.

It localises to the cytoplasm. It catalyses the reaction uroporphyrinogen III + 4 H(+) = coproporphyrinogen III + 4 CO2. Its pathway is porphyrin-containing compound metabolism; protoporphyrin-IX biosynthesis; coproporphyrinogen-III from 5-aminolevulinate: step 4/4. Its function is as follows. Catalyzes the decarboxylation of four acetate groups of uroporphyrinogen-III to yield coproporphyrinogen-III. The sequence is that of Uroporphyrinogen decarboxylase from Azoarcus sp. (strain BH72).